The primary structure comprises 222 residues: UPF0502 protein XAC4278 (222 aa).

Belongs to the UPF0502 family.

This is UPF0502 protein XAC4278 from Xanthomonas axonopodis pv. citri (strain 306).